Here is a 333-residue protein sequence, read N- to C-terminus: GTPase Obg (333 aa).

The Obg domain occupies 1 to 158; it reads MFIDSAKIYV…RNIDLELKLL (158 aa). The interval 121-143 is disordered; that stretch reads HGGKGNQHFATPTNRAPRYSEPA. An OBG-type G domain is found at 159–323; the sequence is ADIGLVGFPN…LKDVLWRIIQ (165 aa). GTP-binding positions include 165-172, 190-194, 212-215, 279-282, and 304-306; these read GFPNAGKS, FTTLE, DIPG, SKMD, and SSV. Positions 172 and 192 each coordinate Mg(2+).

The protein belongs to the TRAFAC class OBG-HflX-like GTPase superfamily. OBG GTPase family. In terms of assembly, monomer. The cofactor is Mg(2+).

Its subcellular location is the cytoplasm. In terms of biological role, an essential GTPase which binds GTP, GDP and possibly (p)ppGpp with moderate affinity, with high nucleotide exchange rates and a fairly low GTP hydrolysis rate. Plays a role in control of the cell cycle, stress response, ribosome biogenesis and in those bacteria that undergo differentiation, in morphogenesis control. The polypeptide is GTPase Obg (Chloroherpeton thalassium (strain ATCC 35110 / GB-78)).